The chain runs to 331 residues: MDEKTKIYDITIIGGGPVGLFAAFYAGMRNASVKIIESLPQLGGQLSTLYPEKYIYDIPGYPAVRAQELVNNLIQQMKPFDPTIALEEAVISVEKQVDGTFEIITKKDTHYSKAIVITAGNGAFEPRRLDLPEAEQYEGKNIHYFINDLSRFSGRRVAVCGGGDSAVDWALMLEKVASSVSIVHRRNAFRAHEHSVNNLEKSSITIKTPFIPTEVLGNGDKLTHITLQEVKGDTSETLEIDDFIINYGFVSSLGPIKNWGLELERNSIIVNSKMETSIPGIYCAGDICTYDGKVKLIATGFGEAPTAVNNAMNFIDPKTRVQPMHSTSLFE.

The FAD site is built by Glu-37, Gln-45, Tyr-50, Val-90, Phe-124, Asp-286, and Thr-327.

It belongs to the ferredoxin--NADP reductase type 2 family. As to quaternary structure, homodimer. The cofactor is FAD.

The catalysed reaction is 2 reduced [2Fe-2S]-[ferredoxin] + NADP(+) + H(+) = 2 oxidized [2Fe-2S]-[ferredoxin] + NADPH. This chain is Ferredoxin--NADP reductase 2, found in Listeria welshimeri serovar 6b (strain ATCC 35897 / DSM 20650 / CCUG 15529 / CIP 8149 / NCTC 11857 / SLCC 5334 / V8).